We begin with the raw amino-acid sequence, 314 residues long: UDP-3-O-acyl-N-acetylglucosamine deacetylase (314 aa).

3 residues coordinate Zn(2+): histidine 82, histidine 239, and aspartate 243. The active-site Proton donor is histidine 266.

This sequence belongs to the LpxC family. Requires Zn(2+) as cofactor.

It catalyses the reaction a UDP-3-O-[(3R)-3-hydroxyacyl]-N-acetyl-alpha-D-glucosamine + H2O = a UDP-3-O-[(3R)-3-hydroxyacyl]-alpha-D-glucosamine + acetate. The protein operates within glycolipid biosynthesis; lipid IV(A) biosynthesis; lipid IV(A) from (3R)-3-hydroxytetradecanoyl-[acyl-carrier-protein] and UDP-N-acetyl-alpha-D-glucosamine: step 2/6. Its function is as follows. Catalyzes the hydrolysis of UDP-3-O-myristoyl-N-acetylglucosamine to form UDP-3-O-myristoylglucosamine and acetate, the committed step in lipid A biosynthesis. This is UDP-3-O-acyl-N-acetylglucosamine deacetylase from Myxococcus xanthus (strain DK1622).